The following is a 304-amino-acid chain: MSLTVVSMACVGFFLLQGAWPHEGVHRKPSLLAHPGRLVKSEETVILQCWSDVMFEHFLLHREGMFNDTLRLIGEHHDGVSKANFSISRMKQDLAGTYRCYGSVTHSPYQLSAPSDPLDIVIIGLYEKPSLSAQPGPTVLAGENVTLSCSSRSSYDMYHLSREGEAHERRLPAGTKVNGTFQANFPLGPATHGGTYRCFGSFRDSPYEWSKSSDPLLVSVTGNPSNSWPSPTEPSSETGNPRHLHVLIGTSVVKIPFTILLFFLLHRWCSDKKNAAVMDQEPAGNRTVNSEDSDEQDHQEVSYA.

The N-terminal stretch at 1 to 21 (MSLTVVSMACVGFFLLQGAWP) is a signal peptide. Over 22–245 (HEGVHRKPSL…SETGNPRHLH (224 aa)) the chain is Extracellular. Ig-like C2-type domains lie at 42–107 (EETV…VTHS) and 142–205 (GENV…FRDS). Cys49 and Cys100 are disulfide-bonded. N-linked (GlcNAc...) asparagine glycans are attached at residues Asn67, Asn84, Asn144, and Asn178. Cys149 and Cys198 are joined by a disulfide. The disordered stretch occupies residues 220–239 (VTGNPSNSWPSPTEPSSETG). Residues 223–239 (NPSNSWPSPTEPSSETG) show a composition bias toward low complexity. Residues 246 to 264 (VLIGTSVVKIPFTILLFFL) traverse the membrane as a helical segment. The Cytoplasmic segment spans residues 265–304 (LHRWCSDKKNAAVMDQEPAGNRTVNSEDSDEQDHQEVSYA). Positions 280–304 (QEPAGNRTVNSEDSDEQDHQEVSYA) are disordered.

The protein belongs to the immunoglobulin superfamily. In terms of assembly, interacts with the adapter protein TYROBP/DAP12; the interaction enhances KIR2DS1 stability at the cell surface. As to expression, expressed by NK cells.

The protein localises to the cell membrane. Functionally, receptor on natural killer (NK) cells for some HLA-C alleles such as w6. Does not inhibit the activity of NK cells. The sequence is that of Killer cell immunoglobulin-like receptor 2DS1 from Homo sapiens (Human).